The primary structure comprises 139 residues: uncharacterized protein (139 aa).

Residues 22–38 (SVMSVCFMTMSATVLPI) traverse the membrane as a helical segment.

The protein resides in the membrane. This is an uncharacterized protein from Saccharomyces cerevisiae (strain ATCC 204508 / S288c) (Baker's yeast).